The following is a 293-amino-acid chain: MPTSSSFKHRIKEQEDYIRDWTAHREEIARISQDLALIAREINDVAGEIDSVTSSGTAPSTTLVDRVFDESLNFQKIPPLVHSKTPEGNNGRSGDPRPQAAEPPDHLTITRRRTWSRDEVMGDNLLLSSVFQFSKKIRQSIDKTAGKIRILFKDKDRNWDDIESKLRAESEVPIVKTSSMEISSILQELKRVEKQLQAINAMIDPDGTLEALNNMGFPSAMLPSPPKQKSSPVNNHHSPGQTPTLGQPEARALHPAAVSAAAEFENAESEADFSIHFNRVNPDGEEEDVTVHK.

2 disordered regions span residues 78–110 (PPLV…LTIT) and 217–270 (FPSA…AESE). The span at 227 to 245 (KQKSSPVNNHHSPGQTPTL) shows a compositional bias: polar residues.

It belongs to the CEP170 family.

The protein is Cep170-like protein (CEP170P1) of Homo sapiens (Human).